The sequence spans 386 residues: 4-hydroxy-3-methylbut-2-en-1-yl diphosphate synthase (flavodoxin) (386 aa).

4 residues coordinate [4Fe-4S] cluster: C281, C284, C316, and E323.

The protein belongs to the IspG family. [4Fe-4S] cluster is required as a cofactor.

The enzyme catalyses (2E)-4-hydroxy-3-methylbut-2-enyl diphosphate + oxidized [flavodoxin] + H2O + 2 H(+) = 2-C-methyl-D-erythritol 2,4-cyclic diphosphate + reduced [flavodoxin]. It participates in isoprenoid biosynthesis; isopentenyl diphosphate biosynthesis via DXP pathway; isopentenyl diphosphate from 1-deoxy-D-xylulose 5-phosphate: step 5/6. In terms of biological role, converts 2C-methyl-D-erythritol 2,4-cyclodiphosphate (ME-2,4cPP) into 1-hydroxy-2-methyl-2-(E)-butenyl 4-diphosphate. The protein is 4-hydroxy-3-methylbut-2-en-1-yl diphosphate synthase (flavodoxin) of Corynebacterium jeikeium (strain K411).